Reading from the N-terminus, the 159-residue chain is Galactose-specific lectin nattectin (159 aa).

Residues Met-1–Ala-21 form the signal peptide. Residues Asn-22–Thr-24 constitute a propeptide that is removed on maturation. Disulfide bonds link Cys-31/Cys-42, Cys-59/Cys-155, and Cys-132/Cys-147. The C-type lectin domain maps to His-38–Ala-156. Positions 122, 124, 130, and 143 each coordinate Ca(2+). The short motif at Gln-122–Asp-124 is the Galactose-binding element.

As to quaternary structure, monomer. Not glycosylated. As to expression, expressed by the venom gland.

The protein resides in the secreted. In terms of biological role, galactose specific lectin that exhibits hemagglutination activity (minimum hemagluttination concentration = 2.5 ug/well) in a calcium-independent fashion. Has remarkable pro-inflammatory activity, inducing neutrophil mobilization in mice. Plays a crucial role in the innate immune system and chronic manifestations, especially in neutrophil mobilization. This is Galactose-specific lectin nattectin from Thalassophryne nattereri (Copper Joe toadfish).